Consider the following 76-residue polypeptide: Sulfur carrier protein TusA (76 aa).

Cysteine 15 (cysteine persulfide intermediate) is an active-site residue.

This sequence belongs to the sulfur carrier protein TusA family. In terms of assembly, mostly a monomer, a small portion forms homodimer via intermolecular disulfide bonds. Tightly interacts with DsrEFH.

The protein resides in the cytoplasm. Its pathway is energy metabolism; sulfur metabolism. Functionally, sulfur carrier protein involved in sulfur trafficking for oxidative dissimilatory sulfur metabolism. Component of a sulfur relay system that starts with the sulfur-mobilizing rhodanese-like protein Rhd_2599 (Alvin_2599), which transfers the sulfur from a low-molecular-weight thiol, maybe glutathione, to the TusA protein (Alvin_2600); TusA serves as the sulfur donor for DsrEFH, which persulfurates DsrC; persulfurated DsrC very probably serves as a direct substrate for reverse-acting sulfite reductase, DsrAB. TusA seems to be not exclusively dedicated to sulfur oxidation and may have other important roles in the cell. Might also act as a sulfur mediator required for 2-thiouridine formation of tRNA. The protein is Sulfur carrier protein TusA of Allochromatium vinosum (strain ATCC 17899 / DSM 180 / NBRC 103801 / NCIMB 10441 / D) (Chromatium vinosum).